Consider the following 413-residue polypeptide: MSFRDLRNFTEMMRALGYPRHISMENFRTPNFGLVSEVLLWLVKRYEPQTDIPPDVDTEQDRVFFIKAIAQFMATKAHIKLNTKKLYQADGYAVKELLKITSVLYNAMKTKGMEGSEIVEEDVNKFKFDLGSKIADLKAARQLASEITSKGASLYDLLGMEVELREMRTEAIARPLEINETEKVMRIAIKEILTQVQKTKDLLNNVASDEANLEAKIEKRKLELERNRKRLETLQSVRPCFMDEYEKTEEELQKQYDTYLEKFQNLTYLEQQLEDHHRMEQERFEEAKNTLCLIQNKLKEEEKRLLKSGSNDDSDIDIQEDDESDSELEERRLPKPQTAMEMLMQGRPGKRIVGTMQGGDSDDNEDSEESEIDMEDDDDEDDDLEDESISLSPTKPNRRVRKSEPLDESDNDF.

Residues 198–291 (KTKDLLNNVA…ERFEEAKNTL (94 aa)) are a coiled coil. The segment at 305–413 (LLKSGSNDDS…EPLDESDNDF (109 aa)) is disordered. Acidic residues-rich tracts occupy residues 312–328 (DDSDIDIQEDDESDSEL) and 360–388 (DSDDNEDSEESEIDMEDDDDEDDDLEDES). Phosphoserine is present on residues Ser-314, Ser-324, and Ser-326. Ser-409 carries the phosphoserine modification.

The protein belongs to the CLUAP1 family. Interacts with CLU/clusterin. Interacts with UBXN10; the interaction is direct. Expressed in testis, thyroid and trachea and to a lower extent in spinal cord and adrenal gland. Highly expressed in colon cancer and osteosarcoma cell lines.

It is found in the cell projection. The protein resides in the cilium. Its subcellular location is the nucleus. In terms of biological role, required for cilia biogenesis. Appears to function within the multiple intraflagellar transport complex B (IFT-B). Key regulator of hedgehog signaling. The chain is Clusterin-associated protein 1 (CLUAP1) from Homo sapiens (Human).